Reading from the N-terminus, the 182-residue chain is Nucleoside triphosphate/diphosphate phosphatase (182 aa).

Arg27 serves as the catalytic Proton donor. 6 residues coordinate Mg(2+): Asn91, Asp107, Asp109, Asp111, Asp124, and Glu127.

This sequence belongs to the Ntdp family. Mg(2+) is required as a cofactor.

The catalysed reaction is a ribonucleoside 5'-triphosphate + H2O = a ribonucleoside 5'-diphosphate + phosphate + H(+). It catalyses the reaction a ribonucleoside 5'-diphosphate + H2O = a ribonucleoside 5'-phosphate + phosphate + H(+). In terms of biological role, has nucleoside phosphatase activity towards nucleoside triphosphates and nucleoside diphosphates. The polypeptide is Nucleoside triphosphate/diphosphate phosphatase (Lactiplantibacillus plantarum (strain ATCC BAA-793 / NCIMB 8826 / WCFS1) (Lactobacillus plantarum)).